We begin with the raw amino-acid sequence, 92 residues long: Serine rich endogenous peptide 11 (92 aa).

The first 29 residues, 1–29 (MENNTFSSKSINLLILLLLLCTFLCQTES), serve as a signal peptide directing secretion. Residues 50–92 (PNTDIGTPSSTSDRGGGGNGRRLMSQMDVGASSSGQGGGRNRH) are disordered. A compositionally biased stretch (polar residues) spans 53 to 62 (DIGTPSSTSD). Short sequence motifs (SCOOP motif) lie at residues 53–67 (DIGTPSSTSDRGGGG) and 75–89 (QMDVGASSSGQGGGR). 2 consecutive short sequence motifs (sxS motif essential for MIK2 binding) follow at residues 59–61 (STS) and 81–83 (SSS).

It belongs to the serine rich endogenous peptide (SCOOP) phytocytokine family. Interacts with MIK2 (via extracellular leucine-rich repeat domain); this interaction triggers the formation of complex between MIK2 and the BAK1/SERK3 and SERK4 coreceptors, and subsequent BAK1 activation by phosphorylation. As to expression, mostly expressed in seedlings shoots and roots, and, to a lower extent, in leaves.

The protein resides in the cell membrane. The protein localises to the secreted. It is found in the extracellular space. Its subcellular location is the apoplast. In terms of biological role, brassicaceae-specific phytocytokine (plant endogenous peptide released into the apoplast) perceived by MIK2 in a BAK1/SERK3 and SERK4 coreceptors-dependent manner, that modulates various physiological and antimicrobial processes including growth prevention and reactive oxygen species (ROS) response regulation. The polypeptide is Serine rich endogenous peptide 11 (Arabidopsis thaliana (Mouse-ear cress)).